Consider the following 143-residue polypeptide: Flagellar assembly factor FliW (143 aa).

The protein belongs to the FliW family. Interacts with translational regulator CsrA and flagellin(s).

It is found in the cytoplasm. Acts as an anti-CsrA protein, binds CsrA and prevents it from repressing translation of its target genes, one of which is flagellin. Binds to flagellin and participates in the assembly of the flagellum. In Bacillus velezensis (strain DSM 23117 / BGSC 10A6 / LMG 26770 / FZB42) (Bacillus amyloliquefaciens subsp. plantarum), this protein is Flagellar assembly factor FliW.